The sequence spans 343 residues: Serine/threonine-protein kinase SRK2C (343 aa).

A Protein kinase domain is found at 4-260; it reads YEIVKDIGSG…IEEIKNHSWF (257 aa). Residues 10 to 18 and Lys-33 each bind ATP; that span reads IGSGNFGVA. The active-site Proton acceptor is the Asp-123. Thr-158 bears the Phosphothreonine mark.

Belongs to the protein kinase superfamily. Ser/Thr protein kinase family. As to quaternary structure, interacts with I-2 and TOPP1. As to expression, expressed in seedlings.

The enzyme catalyses L-seryl-[protein] + ATP = O-phospho-L-seryl-[protein] + ADP + H(+). It carries out the reaction L-threonyl-[protein] + ATP = O-phospho-L-threonyl-[protein] + ADP + H(+). Its function is as follows. Involved in gene regulation and confers tolerance to drought and osmotic stress. This Arabidopsis thaliana (Mouse-ear cress) protein is Serine/threonine-protein kinase SRK2C (SRK2C).